A 444-amino-acid chain; its full sequence is Putative GTP cyclohydrolase URC1 (444 aa).

Residue Arg268–Glu272 participates in GTP binding. Cys273, Cys284, and Cys286 together coordinate Zn(2+). Glu315–Arg317 provides a ligand contact to GTP. Asp353 (proton acceptor) is an active-site residue. Arg355 acts as the Nucleophile in catalysis. 2 residues coordinate GTP: Ser377 and Lys382.

The protein belongs to the GTP cyclohydrolase II family.

Its subcellular location is the cytoplasm. It localises to the nucleus. In terms of biological role, involved in uracil catabolism. The chain is Putative GTP cyclohydrolase URC1 (URC1) from Lachancea kluyveri (Yeast).